A 131-amino-acid chain; its full sequence is DNA-directed RNA polymerase subunit Rpo8 (131 aa).

The protein belongs to the archaeal Rpo8 RNA polymerase subunit family. As to quaternary structure, part of the 13-subunit RNA polymerase complex. Interacts with Rpo1N on the periphery of the clamp head.

The protein localises to the cytoplasm. It catalyses the reaction RNA(n) + a ribonucleoside 5'-triphosphate = RNA(n+1) + diphosphate. Its function is as follows. DNA-dependent RNA polymerase (RNAP) catalyzes the transcription of DNA into RNA using the four ribonucleoside triphosphates as substrates. The chain is DNA-directed RNA polymerase subunit Rpo8 from Saccharolobus shibatae (strain ATCC 51178 / DSM 5389 / JCM 8931 / NBRC 15437 / B12) (Sulfolobus shibatae).